A 317-amino-acid polypeptide reads, in one-letter code: Ribosomal protein L11 methyltransferase (317 aa).

Thr-158, Gly-179, Asp-201, and Asn-244 together coordinate S-adenosyl-L-methionine.

This sequence belongs to the methyltransferase superfamily. PrmA family.

The protein resides in the cytoplasm. The enzyme catalyses L-lysyl-[protein] + 3 S-adenosyl-L-methionine = N(6),N(6),N(6)-trimethyl-L-lysyl-[protein] + 3 S-adenosyl-L-homocysteine + 3 H(+). Methylates ribosomal protein L11. This chain is Ribosomal protein L11 methyltransferase, found in Streptococcus uberis (strain ATCC BAA-854 / 0140J).